The sequence spans 1101 residues: MEQPGAAASGAGGGSEEPGGGRSNKRSAGNRAANEEETKNKPKLNIQIKTLADDVRDRITSFRKSTVKKEKPLIQHPIDSQVAMSEFPAAQPLYDERSLNLSEKEVLDLFEKMMEDMNLNEEKKAPLRNKDFTTKREMVVQYISATAKSGGLKNSKHECTLSSQEYVHELRSGISDEKLLNCLESLRVSLTSNPVSWVNNFGHEGLGLLLDELEKLLDKKQQENIDKKNQYKLIQCLKAFMNNKFGLQRILGDERSLLLLARAIDPKQPNMMTEIVKILSAICIVGEENILDKLLGAITTAAERNNRERFSPIVEGLENQEALQLQVACMQFINALVTSPYELDFRIHLRNEFLRSGLKTMLPDLKEKENDELDIQLKVFDENKEDDLTELSHRLNDIRAEMDDMNEVYHLLYNMLKDTAAENYFLSILQHFLLIRNDYYIRPQYYKIIEECVSQIVLHCSGMDPDFKYRQRLDIDLTHLIDSCVNKAKVEESEQKAAEFSKKFDEEFTARQEAQAELQKRDEKIKELEAEIQQLRTQAQVLSSSSGIPGPPAAPPLPGVGPPPPPPAPPLPGGAPLPPPPPPLPGMMGIPPPPPPPLLFGGPPPPPPLGGVPPPPGISLNLPYGMKQKKMYKPEVSMKRINWSKIEPTELSENCFWLRVKEDKFENPDLFAKLALNFATQIKVQKNAEALEEKKTGPTKKKVKELRILDPKTAQNLSIFLGSYRMPYEDIRNVILEVNEDMLSEALIQNLVKHLPEQKILNELAELKNEYDDLCEPEQFGVVMSSVKMLQPRLSSILFKLTFEEHINNIKPSIIAVTLACEELKKSESFNRLLELVLLVGNYMNSGSRNAQSLGFKINFLCKIRDTKSADQKTTLLHFIADICEEKYRDILKFPEELEHVESASKVSAQILKSNLASMEQQIVHLERDIKKFPQAENQHDKFVEKMTSFTKTAREQYEKLSTMHNNMMKLYENLGEYFIFDSKTVSIEEFFGDLNNFRTLFLEAVRENNKRREMEEKTRRAKLAKEKAEQEKLERQKKKKQLIDINKEGDETGVMDNLLEALQSGAAFRDRRKRIPRNPDNRRVPLERSRSRHNGAISSK.

Met-1 bears the N-acetylmethionine mark. A disordered region spans residues 1–44 (MEQPGAAASGAGGGSEEPGGGRSNKRSAGNRAANEEETKNKPKL). The segment covering 10-22 (GAGGGSEEPGGGR) has biased composition (gly residues). A GBD/FH3 domain is found at 98 to 464 (SLNLSEKEVL…QIVLHCSGMD (367 aa)). Coiled coils occupy residues 366-418 (KEKE…MLKD) and 487-547 (KAKV…SSSG). Polar residues predominate over residues 536 to 546 (RTQAQVLSSSS). Disordered stretches follow at residues 536–594 (RTQA…PPPP), 1010–1048 (NKRR…DINK), and 1070–1101 (RDRR…ISSK). The span at 549–594 (PGPPAAPPLPGVGPPPPPPAPPLPGGAPLPPPPPPLPGMMGIPPPP) shows a compositional bias: pro residues. The 75-residue stretch at 549–623 (PGPPAAPPLP…PPPGISLNLP (75 aa)) folds into the FH1 domain. Residues 628 to 1028 (QKKMYKPEVS…TRRAKLAKEK (401 aa)) enclose the FH2 domain. Positions 903-1053 (SASKVSAQIL…IDINKEGDET (151 aa)) form a coiled coil. Basic and acidic residues-rich tracts occupy residues 1010–1035 (NKRR…EKLE) and 1078–1090 (RNPD…LERS). Residues 1051-1081 (DETGVMDNLLEALQSGAAFRDRRKRIPRNPD) enclose the DAD domain.

This sequence belongs to the formin homology family. Diaphanous subfamily. As to quaternary structure, isoform 3 interacts with RHOD in the GTP-bound form. Expressed in testis, ovary, small intestine, prostate, lung, liver, kidney and leukocytes.

The protein localises to the cytoplasm. The protein resides in the cytosol. Its subcellular location is the early endosome. Its function is as follows. Could be involved in oogenesis. Involved in the regulation of endosome dynamics. Implicated in a novel signal transduction pathway, in which isoform 3 and CSK are sequentially activated by RHOD to regulate the motility of early endosomes through interactions with the actin cytoskeleton. The protein is Protein diaphanous homolog 2 (DIAPH2) of Homo sapiens (Human).